Here is a 117-residue protein sequence, read N- to C-terminus: Immunoglobulin heavy variable 3-11 (117 aa).

The N-terminal stretch at 1-19 (MEFGLSWVFLVAIIKGVQC) is a signal peptide. Pyrrolidone carboxylic acid is present on glutamine 20. The framework-1 stretch occupies residues 20–44 (QVQLVESGGGLVKPGGSLRLSCAAS). Residues 20-117 (QVQLVESGGG…EDTAVYYCAR (98 aa)) enclose the Ig-like domain. A disulfide bridge connects residues cysteine 41 and cysteine 115. Positions 45–52 (GFTFSDYY) are complementarity-determining-1. Residues 53 to 69 (MSWIRQAPGKGLEWVSY) are framework-2. Positions 70–77 (ISSSSSYT) are complementarity-determining-2. The tract at residues 78–115 (NYADSVKGRFTISRDNAKNSLYLQMNSLRAEDTAVYYC) is framework-3. Positions 116 to 117 (AR) are complementarity-determining-3.

In terms of assembly, immunoglobulins are composed of two identical heavy chains and two identical light chains; disulfide-linked.

Its subcellular location is the secreted. It is found in the cell membrane. Its function is as follows. V region of the variable domain of immunoglobulin heavy chains that participates in the antigen recognition. Immunoglobulins, also known as antibodies, are membrane-bound or secreted glycoproteins produced by B lymphocytes. In the recognition phase of humoral immunity, the membrane-bound immunoglobulins serve as receptors which, upon binding of a specific antigen, trigger the clonal expansion and differentiation of B lymphocytes into immunoglobulins-secreting plasma cells. Secreted immunoglobulins mediate the effector phase of humoral immunity, which results in the elimination of bound antigens. The antigen binding site is formed by the variable domain of one heavy chain, together with that of its associated light chain. Thus, each immunoglobulin has two antigen binding sites with remarkable affinity for a particular antigen. The variable domains are assembled by a process called V-(D)-J rearrangement and can then be subjected to somatic hypermutations which, after exposure to antigen and selection, allow affinity maturation for a particular antigen. The polypeptide is Immunoglobulin heavy variable 3-11 (Homo sapiens (Human)).